A 549-amino-acid chain; its full sequence is MEADFVIIGSGSAGSAMAYRLSENGRYSVIVIEYGVPDVGPLIQMPAALSFPMNMETYDWGFSSEPEPHIGGRSLVTPRGKVLGGSSSINGMVYVRGHACDFDHWSQSGARGWAYADVLPYFKRMENSQGGQEGWRGTNGPLYVQRGKRDNPLFHAFVEAGHQAGFEVTDDYNGEKQEGFGPMEQTIHNGRRWSAANAYLKPALKRPNVKLVKGFARKIVLEGKRAVGVEIEAGRTFSTIRARREVIIAASSINSPKLLMLSGIGPAAHLKEHGIDLVADRPGVGQNLQDHLEVYIQQECTQPITLYSELNLFSKARIGVEWLLFKTGDGATNHFESAAFVRSKAGVEYPDIQYHFLPVAIRYDGKAAAQSHGFQAHVGPMRSKSRGSVTLRSANPREKPVIKFNYMSHEDDWADFRHCVRLTREIFGQAAFDPYRGAEIQPGAHVQTDDEIDNFIREHVESAFHPCGTCKMGAVDDPMAVVDPECRVIGVEGLRVADSSIFPRITNGNLNGPSIMVGEKASDHILGRTPLARSNQEPWINPRWQVSDR.

Residue 4 to 33 coordinates FAD; sequence DFVIIGSGSAGSAMAYRLSENGRYSVIVIE. His-465 (proton acceptor) is an active-site residue.

This sequence belongs to the GMC oxidoreductase family. Requires FAD as cofactor.

The catalysed reaction is choline + A = betaine aldehyde + AH2. The enzyme catalyses betaine aldehyde + NAD(+) + H2O = glycine betaine + NADH + 2 H(+). It functions in the pathway amine and polyamine biosynthesis; betaine biosynthesis via choline pathway; betaine aldehyde from choline (cytochrome c reductase route): step 1/1. Involved in the biosynthesis of the osmoprotectant glycine betaine. Catalyzes the oxidation of choline to betaine aldehyde and betaine aldehyde to glycine betaine at the same rate. The sequence is that of Oxygen-dependent choline dehydrogenase from Brucella suis biovar 1 (strain 1330).